The sequence spans 710 residues: Protein Smaug homolog 1 (710 aa).

Disordered regions lie at residues 276 to 319 (ARGS…FQDE) and 441 to 476 (NQAT…ESDL). Positions 309–318 (QSTACNTFQD) are enriched in polar residues. The SAM domain maps to 319–379 (EGSGMKDVPA…KIVISIQKLK (61 aa)).

The protein belongs to the SMAUG family.

Its subcellular location is the cytoplasm. The protein resides in the cell projection. It is found in the dendrite. The protein localises to the synapse. It localises to the synaptosome. Its function is as follows. Acts as a translational repressor. This is Protein Smaug homolog 1 (samd4a) from Xenopus laevis (African clawed frog).